The primary structure comprises 271 residues: Tryptophan synthase alpha chain (271 aa).

Catalysis depends on proton acceptor residues E49 and D60.

The protein belongs to the TrpA family. Tetramer of two alpha and two beta chains.

The enzyme catalyses (1S,2R)-1-C-(indol-3-yl)glycerol 3-phosphate + L-serine = D-glyceraldehyde 3-phosphate + L-tryptophan + H2O. Its pathway is amino-acid biosynthesis; L-tryptophan biosynthesis; L-tryptophan from chorismate: step 5/5. The alpha subunit is responsible for the aldol cleavage of indoleglycerol phosphate to indole and glyceraldehyde 3-phosphate. This chain is Tryptophan synthase alpha chain, found in Blochmanniella floridana.